A 329-amino-acid polypeptide reads, in one-letter code: Glycerol-3-phosphate dehydrogenase [NAD(P)+] (329 aa).

Tryptophan 15, histidine 35, and lysine 107 together coordinate NADPH. Positions 107, 135, and 137 each coordinate sn-glycerol 3-phosphate. Alanine 139 provides a ligand contact to NADPH. Sn-glycerol 3-phosphate-binding residues include lysine 190, aspartate 243, serine 253, arginine 254, and asparagine 255. Lysine 190 functions as the Proton acceptor in the catalytic mechanism. Arginine 254 is a binding site for NADPH. Residues leucine 276 and glutamate 278 each coordinate NADPH.

The protein belongs to the NAD-dependent glycerol-3-phosphate dehydrogenase family.

The protein resides in the cytoplasm. The enzyme catalyses sn-glycerol 3-phosphate + NAD(+) = dihydroxyacetone phosphate + NADH + H(+). It carries out the reaction sn-glycerol 3-phosphate + NADP(+) = dihydroxyacetone phosphate + NADPH + H(+). Its pathway is membrane lipid metabolism; glycerophospholipid metabolism. Catalyzes the reduction of the glycolytic intermediate dihydroxyacetone phosphate (DHAP) to sn-glycerol 3-phosphate (G3P), the key precursor for phospholipid synthesis. The chain is Glycerol-3-phosphate dehydrogenase [NAD(P)+] from Rhodopseudomonas palustris (strain TIE-1).